Reading from the N-terminus, the 139-residue chain is Putative truncated protein trichome birefringence-like 46 (139 aa).

Belongs to the PC-esterase family. TBL subfamily.

The polypeptide is Putative truncated protein trichome birefringence-like 46 (TBL46) (Arabidopsis thaliana (Mouse-ear cress)).